The following is a 221-amino-acid chain: Probable septum site-determining protein MinC (221 aa).

It belongs to the MinC family. As to quaternary structure, interacts with MinD and FtsZ.

In terms of biological role, cell division inhibitor that blocks the formation of polar Z ring septums. Rapidly oscillates between the poles of the cell to destabilize FtsZ filaments that have formed before they mature into polar Z rings. Prevents FtsZ polymerization. The polypeptide is Probable septum site-determining protein MinC (Prochlorococcus marinus (strain SARG / CCMP1375 / SS120)).